Reading from the N-terminus, the 174-residue chain is N5-carboxyaminoimidazole ribonucleotide mutase (174 aa).

Positions 15, 18, and 45 each coordinate substrate.

Belongs to the AIR carboxylase family. Class I subfamily.

It carries out the reaction 5-carboxyamino-1-(5-phospho-D-ribosyl)imidazole + H(+) = 5-amino-1-(5-phospho-D-ribosyl)imidazole-4-carboxylate. It functions in the pathway purine metabolism; IMP biosynthesis via de novo pathway; 5-amino-1-(5-phospho-D-ribosyl)imidazole-4-carboxylate from 5-amino-1-(5-phospho-D-ribosyl)imidazole (N5-CAIR route): step 2/2. Functionally, catalyzes the conversion of N5-carboxyaminoimidazole ribonucleotide (N5-CAIR) to 4-carboxy-5-aminoimidazole ribonucleotide (CAIR). This chain is N5-carboxyaminoimidazole ribonucleotide mutase, found in Pyrococcus abyssi (strain GE5 / Orsay).